The primary structure comprises 1268 residues: uncharacterized protein (1268 aa).

Over residues 191–206 (KIVSVKPSKSSQQVDV) the composition is skewed to low complexity. Disordered stretches follow at residues 191 to 235 (KIVS…SKKK) and 253 to 273 (NCRS…SKGC). A compositionally biased stretch (basic and acidic residues) spans 223–235 (RKPEKSSQDSKKK). The CCHC-type zinc-finger motif lies at 239-256 (PTCFYCNKKGHYATNCRS). The region spanning 465 to 644 (EMGVIVPITY…KQVTFLGFVD (180 aa)) is the Reverse transcriptase domain. Residues 844 to 997 (VPEAPWKRIH…TPAECHFGRK (154 aa)) form the Integrase catalytic domain. A disordered region spans residues 1092–1268 (GDYSRSSVNP…RRERVRTTWR (177 aa)). 2 stretches are compositionally biased toward polar residues: residues 1127–1143 (VTSN…SRIT) and 1160–1169 (GSCSPTNNDV). Low complexity predominate over residues 1208–1221 (PSTSTGTPRGSTST). Residues 1222 to 1249 (QLGQASTRNGSRYTASGRNPSCQGNRYS) are compositionally biased toward polar residues. Positions 1257–1268 (TARRERVRTTWR) are enriched in basic and acidic residues.

This is an uncharacterized protein from Caenorhabditis elegans.